A 798-amino-acid chain; its full sequence is Probable G-protein coupled receptor 156 (798 aa).

Topologically, residues 1-49 are extracellular; that stretch reads MEPEINCSEFCDSFPGQELDRRPLHDLCKTTITESQHSSTAASPLSPAL. A glycan (N-linked (GlcNAc...) asparagine) is linked at N6. A helical membrane pass occupies residues 50–70; that stretch reads LGIMWTFLSCGLLLVLFFLAF. Over 71–86 the chain is Cytoplasmic; sequence TIRCRKNRIVKMSSPN. A helical membrane pass occupies residues 87-107; the sequence is LNVVTLLGSCLTYISAYLFGI. Residues 108–118 lie on the Extracellular side of the membrane; the sequence is QDALEGSSVEA. The chain crosses the membrane as a helical span at residues 119–139; sequence LIQTRLSLLCIGTSLVFGPIL. Residues 140–164 are Cytoplasmic-facing; the sequence is GKSWRLYKVFTQRVPDKRVIIKDLQ. The helical transmembrane segment at 165–185 threads the bilayer; it reads LLGLVAALVVADVILLVTWVL. Residues 186–222 are Extracellular-facing; sequence TDPIQCLQMLGVSMKVTGRDVSCSLTNTHFCASRYSD. A helical transmembrane segment spans residues 223 to 243; sequence VWIALVLGCKGLLLLYGAYLA. At 244–257 the chain is on the cytoplasmic side; it reads GLTNHVSSPPVNQS. Residues 258–278 form a helical membrane-spanning segment; sequence LTIMVGVNLLLLTAGLLFVVT. The Extracellular segment spans residues 279–288; that stretch reads RYLHSWPNLV. A helical transmembrane segment spans residues 289 to 309; the sequence is FGLTSGGIFVCTTTVNCCVFI. Topologically, residues 310 to 798 are cytoplasmic; the sequence is PQLKQWKAFE…FKDDLKPTLV (489 aa). Residues 353–390 adopt a coiled-coil conformation; the sequence is DEKSCMERLLTEKNAVIESLQEQVSNAKEKLVKLMSAE. Disordered stretches follow at residues 441-497, 546-666, and 693-715; these read HVQG…PMAP, SEAP…KQCE, and PAAP…PRLS. Positions 479-492 are enriched in basic and acidic residues; it reads PKAEQSEGPERGDQ. The segment covering 559–572 has biased composition (polar residues); that stretch reads LWKSTTSRSPQKLS. The span at 583-594 shows a compositional bias: basic residues; the sequence is VRRRRAAQRARS. The span at 606 to 624 shows a compositional bias: polar residues; it reads HQANSTVSSSQSGLIVQNR. Low complexity predominate over residues 639 to 648; that stretch reads PRSSSVKPSP.

The protein belongs to the G-protein coupled receptor 3 family. GABA-B receptor subfamily. In terms of tissue distribution, expressed in the outer and inner hair cells of the organ of Corti (at protein level). Expressed in the utricle and saccule within the vestibule (at protein level).

It localises to the cell membrane. It is found in the postsynaptic cell membrane. Its function is as follows. Orphan G-protein coupled receptor involved in the regulation of hair cell orientation in mechanosensory organs of the inner ear. It is required to trigger a 180 degree reversal in hair cell orientation, creating a virtual line of polarity reversal (LPR) across which stereociliary bundles are arranged in opposite orientations. This Mus musculus (Mouse) protein is Probable G-protein coupled receptor 156 (Gpr156).